The following is a 371-amino-acid chain: Putrescine N-methyltransferase 2 (371 aa).

Composition is skewed to polar residues over residues methionine 1–phenylalanine 14 and glycine 23–glycine 70. The segment at methionine 1–glycine 70 is disordered. Residues proline 82–threonine 319 form the PABS domain. S-adenosyl-L-methionine contacts are provided by residues glutamine 113, glutamate 188, and aspartate 219 to glycine 220. Aspartate 238 acts as the Proton acceptor in catalysis. Tyrosine 307 contributes to the S-adenosyl-L-methionine binding site.

Belongs to the class I-like SAM-binding methyltransferase superfamily. Spermidine/spermine synthase family. As to expression, mainly expressed in roots.

The catalysed reaction is putrescine + S-adenosyl-L-methionine = N-methylputrescine + S-adenosyl-L-homocysteine + H(+). Its pathway is alkaloid biosynthesis; nicotine biosynthesis. Its function is as follows. Involved in the biosynthesis of pyridine alkaloid natural products, leading mainly to the production of anabasine, anatabine, nicotine and nornicotine, effective deterrents against herbivores with antiparasitic and pesticide properties (neurotoxins); nornicotine serves as the precursor in the synthesis of the carcinogen compound N'-nitrosonornicotine (NNN). Methyltransferase that mediates the conversion of putrescine to N-methylputrescine. This chain is Putrescine N-methyltransferase 2, found in Nicotiana attenuata (Coyote tobacco).